The chain runs to 498 residues: Lysine--tRNA ligase (498 aa).

Residues glutamate 407 and glutamate 414 each coordinate Mg(2+).

It belongs to the class-II aminoacyl-tRNA synthetase family. Homodimer. The cofactor is Mg(2+).

It localises to the cytoplasm. It catalyses the reaction tRNA(Lys) + L-lysine + ATP = L-lysyl-tRNA(Lys) + AMP + diphosphate. This chain is Lysine--tRNA ligase, found in Rhizobium etli (strain ATCC 51251 / DSM 11541 / JCM 21823 / NBRC 15573 / CFN 42).